Here is a 529-residue protein sequence, read N- to C-terminus: GMP synthase [glutamine-hydrolyzing] (529 aa).

In terms of domain architecture, Glutamine amidotransferase type-1 spans R9–L211. Residue C86 is the Nucleophile of the active site. Residues H185 and E187 contribute to the active site. Positions W212–R404 constitute a GMPS ATP-PPase domain. Residue S239–S245 coordinates ATP.

Homodimer.

The catalysed reaction is XMP + L-glutamine + ATP + H2O = GMP + L-glutamate + AMP + diphosphate + 2 H(+). The protein operates within purine metabolism; GMP biosynthesis; GMP from XMP (L-Gln route): step 1/1. In terms of biological role, catalyzes the synthesis of GMP from XMP. In Aeromonas hydrophila subsp. hydrophila (strain ATCC 7966 / DSM 30187 / BCRC 13018 / CCUG 14551 / JCM 1027 / KCTC 2358 / NCIMB 9240 / NCTC 8049), this protein is GMP synthase [glutamine-hydrolyzing].